We begin with the raw amino-acid sequence, 1071 residues long: Nonribosomal peptide synthetase flvI (1071 aa).

Positions 33 to 417 (RRVLEQHDAP…GSLHFISRKD (385 aa)) are adenylation. Residues 552–628 (MPLTEIELKM…MLCQNIKTDV (77 aa)) enclose the Carrier domain. S589 carries the O-(pantetheine 4'-phosphoryl)serine modification. Residues 689–961 (NYTLRLEFKL…IDDRDIEQLS (273 aa)) form a condensation region.

Belongs to the NRP synthetase family.

The enzyme catalyses (2S)-5,5-dimethylpiperidine-2-carboxylate + 10-hydroxy-pre-flavunoidine + ATP = flavunoidine + AMP + diphosphate + H(+). It functions in the pathway secondary metabolite biosynthesis; terpenoid biosynthesis. Nonribosomal peptide synthetase; part of the gene cluster that mediates the biosynthesis of flavunoidine, an alkaloidal terpenoid with a tetracyclic cage-like core connected to dimethylcadaverine via a C-N bond and acylated with 5,5-dimethyl-L-pipecolate. The tetracyclic core is synthesized by the terpene cyclase flvE and the cytochrome P450 monooxygenase flvD. The terpene cyclase flvE catalyzes the cyclization of farnesyl pyrophosphate (FPP) to form (1R,4R,5S)-(+)-acoradiene and the cytochrome P450 monooxygenase flvD is then responsible for oxidative conversion of (1R,4R,5S)-(+)-acoradiene into the tetracyclic cage present in the final product flavunoidine. In parallel, the N-methyltransferase flvH dimethylates L-lysine to give N,N-dimethyl-L-Lysin which is decarboxylated by flvG to afford dimethylcadaverine. The terpene cyclase-like protein flvF is the enzyme that attaches the dimethylcadaverine precusor at the C-7 of the tetracyclic cage to yield pre-flavunoidine. The cytochrome monooxygenase flvC hydroxylates the C-10 position of pre-flavunoidine whereas the NRPS flvI acylates the terpenoid core at the hydroxylated C-10 with dimethylpipecolate to yield final flavunoidine. The bifunctional enzyme flvA and the dehydrogenase flvB are responsible for the synthesis of the dimethylpipecolate precursor. The PLP-dependent lyase domain of flvA might use L-O-acetyl-homoserine and alpha-keto-isovalerate to form an intermediary ketone that can cyclize intramolecularly to yield an imine. The imine can be reduced by flvB to yield the 6-carboxylated pipecolate. The C-terminal alpha-KG-dependent oxygenase domain of flvA is then proposed to catalyze the decarboxylation to yield dimethylpipecolate. In Aspergillus flavus (strain ATCC 200026 / FGSC A1120 / IAM 13836 / NRRL 3357 / JCM 12722 / SRRC 167), this protein is Nonribosomal peptide synthetase flvI.